Reading from the N-terminus, the 469-residue chain is Neuraminidase (469 aa).

Residues 1 to 9 are Intravirion-facing; the sequence is MNPNQKIIT. A helical membrane pass occupies residues 10 to 30; that stretch reads IGSVSLTIATICFLMQIAILV. The tract at residues 11–33 is involved in apical transport and lipid raft association; that stretch reads GSVSLTIATICFLMQIAILVTTV. Over 31–469 the chain is Virion surface; sequence TTVTLHFKQY…DGADINLMPI (439 aa). Positions 36 to 88 are hypervariable stalk region; that stretch reads HFKQYECSSPPNNQVIPCQPTIIERNITEIVYLTNTTIEKEICPKLVEYRNWS. N61, N70, and N86 each carry an N-linked (GlcNAc...) asparagine; by host glycan. The tract at residues 91 to 469 is head of neuraminidase; that stretch reads QCKITGFAPF…DGADINLMPI (379 aa). 8 disulfides stabilise this stretch: C92-C417, C124-C129, C183-C230, C232-C237, C278-C291, C280-C289, C318-C337, and C421-C447. R118 is a substrate binding site. N146 carries an N-linked (GlcNAc...) asparagine; by host glycan. The active-site Proton donor/acceptor is the D151. R152 lines the substrate pocket. N-linked (GlcNAc...) asparagine; by host glycosylation is found at N200 and N234. A substrate-binding site is contributed by 276 to 277; sequence EE. Residue R292 participates in substrate binding. The Ca(2+) site is built by D293, G297, and D324. Positions 326–350 are disordered; that stretch reads PRKNDSSSSSYCQNPNNEKGSHGVK. N-linked (GlcNAc...) asparagine; by host glycosylation is present at N329. A compositionally biased stretch (polar residues) spans 331 to 343; that stretch reads SSSSSYCQNPNNE. Position 371 (R371) interacts with substrate. N402 carries an N-linked (GlcNAc...) asparagine; by host glycan. The active-site Nucleophile is the Y406.

It belongs to the glycosyl hydrolase 34 family. As to quaternary structure, homotetramer. It depends on Ca(2+) as a cofactor. N-glycosylated.

The protein resides in the virion membrane. It localises to the host apical cell membrane. It carries out the reaction Hydrolysis of alpha-(2-&gt;3)-, alpha-(2-&gt;6)-, alpha-(2-&gt;8)- glycosidic linkages of terminal sialic acid residues in oligosaccharides, glycoproteins, glycolipids, colominic acid and synthetic substrates.. Its activity is regulated as follows. Inhibited by the neuraminidase inhibitors zanamivir (Relenza) and oseltamivir (Tamiflu). These drugs interfere with the release of progeny virus from infected cells and are effective against all influenza strains. Resistance to neuraminidase inhibitors is quite rare. Its function is as follows. Catalyzes the removal of terminal sialic acid residues from viral and cellular glycoconjugates. Cleaves off the terminal sialic acids on the glycosylated HA during virus budding to facilitate virus release. Additionally helps virus spread through the circulation by further removing sialic acids from the cell surface. These cleavages prevent self-aggregation and ensure the efficient spread of the progeny virus from cell to cell. Otherwise, infection would be limited to one round of replication. Described as a receptor-destroying enzyme because it cleaves a terminal sialic acid from the cellular receptors. May facilitate viral invasion of the upper airways by cleaving the sialic acid moieties on the mucin of the airway epithelial cells. Likely to plays a role in the budding process through its association with lipid rafts during intracellular transport. May additionally display a raft-association independent effect on budding. Plays a role in the determination of host range restriction on replication and virulence. Sialidase activity in late endosome/lysosome traffic seems to enhance virus replication. This is Neuraminidase from Influenza A virus (strain A/Kitakyushu/159/1993 H3N2).